The following is a 486-amino-acid chain: MATFKDACYYYKRLNKLNHAVLKLGVNDAWRPSPPTKYKGWCLDCCQHTDLTYCRGCSIYHVCQWCNQYGRCFLDDEPHLLRMRTFKNNVTKEDLANLIDMYNVLFPVNQKTVNKFINNTKQHKCRNEYVPQWYNHLLMPITLQSLSIELDGDTYYIFGYYDNMKNINQTPFSFVNLIDMYDKLLLDDVNFNRMSFLPLILQQEYALRYFSKSRFISEEKRQINHSHFSINILENLHNPNFKIQITRNCSTMSVRWNEACKLVKDVGTYFDILKTSHVEFYDVSPRCRMFTQHKLKAVSKVIKPNYVTSNHRALATEVHNCRWCSVNNNLIVWNDFRLRNICDNILNFIRALIKSNTGIGHCSSQERIHIYIRDVFDVCDESKWNASVVGIFNCLEPVELGNAHYILLNHEVNWDVANVLIQNIGKIPQILTLNDVITALHSMIYDWFDVRYMRNTPTTTFTVDKLKQLCARRKTVDYDSGVSDVE.

An RNA-binding region spans residues 1 to 81 (MATFKDACYY…CFLDDEPHLL (81 aa)). The segment at 42-79 (CLDCCQHTDLTYCRGCSIYHVCQWCNQYGRCFLDDEPH) is zinc-binding domain. An important for cytoskeleton localization region spans residues 82-176 (RMRTFKNNVT…INQTPFSFVN (95 aa)). An interaction with host IRF3 region spans residues 317–486 (EVHNCRWCSV…DYDSGVSDVE (170 aa)). The short motif at 479–483 (DSGVS) is the IKBKB-like degron (ILD) motif element. The short motif at 480–483 (SGVS) is the pLxIS motif element.

The protein belongs to the rotavirus NSP1 family. Interacts (via C-terminus) with host IRF3; this interaction leads to IRF3 degradation. Interacts with host IRF7; this interaction leads to IRF7 degradation. Interacts with host CUL1 and CUL3. Interacts with host BTRC. Post-translationally, the C-terminal region is phosphorylated by host CKII/CSNK2A1. Phosphorylation of the DSGXS motif is essential for host NF-kappa-B inhibition.

It localises to the host cytoplasm. The protein resides in the host cytoskeleton. Plays a role in the inhibition of host innate immunity by inducing the degradation of key host factors required to activate interferon production such as IRF3, IRF5 or IRF7. Associates with components of cullin RING ligases (CRLs) including CUL1 or CUL3, which are essential multisubunit ubiquitination complexes, to modulate their activities. Recognizes the host NF-kappa-B regulator BTRC through the presence of a DSGXS motif in the C-terminal substrate recognition domain. This Sus scrofa (Pig) protein is Non-structural protein 1.